The chain runs to 91 residues: Putative septation protein SpoVG (91 aa).

This sequence belongs to the SpoVG family.

In terms of biological role, could be involved in septation. The protein is Putative septation protein SpoVG of Caldanaerobacter subterraneus subsp. tengcongensis (strain DSM 15242 / JCM 11007 / NBRC 100824 / MB4) (Thermoanaerobacter tengcongensis).